The primary structure comprises 88 residues: Small ribosomal subunit protein uS15 (88 aa).

It belongs to the universal ribosomal protein uS15 family. Part of the 30S ribosomal subunit. Forms a bridge to the 50S subunit in the 70S ribosome, contacting the 23S rRNA.

One of the primary rRNA binding proteins, it binds directly to 16S rRNA where it helps nucleate assembly of the platform of the 30S subunit by binding and bridging several RNA helices of the 16S rRNA. Functionally, forms an intersubunit bridge (bridge B4) with the 23S rRNA of the 50S subunit in the ribosome. This Polaromonas naphthalenivorans (strain CJ2) protein is Small ribosomal subunit protein uS15.